Consider the following 947-residue polypeptide: MTPLSSPLRQYWQTVVERLPEGFTETSLSAQAKSVLTFSDFALDSVIAHPEWLAELESASPQADEWRHYAGWLQEALADVCDDASLMRELRLFRRRIMVRIAWAQALSRVEDETILQQLSHLAETLIVGARDWLYAACCREWGTPCNPQGVPQPLLILGMGKLGGGELNFSSDIDLIFAWPEHGTTQGGRRELDNAQFFTRLGQRLIKALDQPTMDGFVYRVDMRLRPFGDSGPLVLSFAALEDYYQEQGRDWERYAMVKARIMGDNNDAWSRELRAMLRPFVFRRYIDFSVIQSLRNMKGMIAREVRRRGLKDNIKLGAGGIREIEFIVQVFQLIRGGREPSLQSRSLLPTLNAITALHLLPENDVTQLRAAYLFLRRLENLLQSINDEQTQTLPADDLNRARLAWGMNTDNWPQLVGKLTEHMANVRRVFNELIGDDEADTPQEEELSEPWREVWQDTLQEGDSTPVLAHLADEDRRQLLTLIADFRKELDKRPIGPRGRQVLDQLMPRLLDDVCSREDAAVTLSRITPLLAGIVTRTTYLELLSEFPGALKHLIMLCAASPMIASQLARYPLLLDELLDPGTLYQPTATNAYRDELRQYLLRVPEEDEEQQLEALRQFKQAQLLRIAAADIAGTLSVMKVSDHLTWLAEAMIDAVVQQAWMQMVARYGQPTHLDERQGRGFAVVGYGKLGGWELGYSSDLDLIFLHDCPIDVMTNGEREIDGRQFYLRLAQRIMHLFSTRTSSGILYEVDARLRPSGAAGMLVTSADAFADYQQHEAWTWEHQALVRARVVYGDPQLTSQFDAVRRTIMTTARDGKTLQTEVREMREKMRSHLGNKHRDRFDIKADEGGITDIEFIAQYLVLRYAHEKPKLTRWSDNVRILELLAQNGIMDEHEAQALTVAYTTLRDELHHLALQELPGHVAQTCFSKERALVQASWRKWLVAV.

An adenylyl removase region spans residues 1 to 440 (MTPLSSPLRQ…VFNELIGDDE (440 aa)). Positions 450-947 (SEPWREVWQD…ASWRKWLVAV (498 aa)) are adenylyl transferase.

It belongs to the GlnE family. Mg(2+) serves as cofactor.

It carries out the reaction [glutamine synthetase]-O(4)-(5'-adenylyl)-L-tyrosine + phosphate = [glutamine synthetase]-L-tyrosine + ADP. It catalyses the reaction [glutamine synthetase]-L-tyrosine + ATP = [glutamine synthetase]-O(4)-(5'-adenylyl)-L-tyrosine + diphosphate. In terms of biological role, involved in the regulation of glutamine synthetase GlnA, a key enzyme in the process to assimilate ammonia. When cellular nitrogen levels are high, the C-terminal adenylyl transferase (AT) inactivates GlnA by covalent transfer of an adenylyl group from ATP to specific tyrosine residue of GlnA, thus reducing its activity. Conversely, when nitrogen levels are low, the N-terminal adenylyl removase (AR) activates GlnA by removing the adenylyl group by phosphorolysis, increasing its activity. The regulatory region of GlnE binds the signal transduction protein PII (GlnB) which indicates the nitrogen status of the cell. The sequence is that of Bifunctional glutamine synthetase adenylyltransferase/adenylyl-removing enzyme from Salmonella arizonae (strain ATCC BAA-731 / CDC346-86 / RSK2980).